The primary structure comprises 885 residues: Protein transport protein SEC24-1 (885 aa).

The Zn(2+) site is built by C164, C167, C186, and C189. The segment at 164–189 (CRRCRSYLNPFVAFIEQGRRWQCNIC) is zinc finger-like. Positions 296-332 (DDYEESDDDDDEDDDDEEEDNEEEEEEEEDEEDDDDS) are disordered.

The protein belongs to the SEC23/SEC24 family. SEC24 subfamily. In terms of assembly, the COPII coat is composed of at least 5 proteins: the SEC23/24 complex, the SEC13/31 complex, and the protein SAR1. Golgi apparatus membrane; Peripheral membrane protein; Cytoplasmic side.

The protein localises to the cytoplasm. Its subcellular location is the cytoplasmic vesicle. It localises to the COPII-coated vesicle membrane. The protein resides in the endoplasmic reticulum membrane. It is found in the golgi apparatus membrane. Component of the coat protein complex II (COPII) which promotes the formation of transport vesicles from the endoplasmic reticulum (ER). The coat has two main functions, the physical deformation of the endoplasmic reticulum membrane into vesicles and the selection of cargo molecules. The protein is Protein transport protein SEC24-1 (SEC241) of Saccharomyces uvarum (strain ATCC 76518 / CBS 7001 / CLIB 283 / NBRC 10550 / MCYC 623 / NCYC 2669 / NRRL Y-11845) (Yeast).